A 279-amino-acid chain; its full sequence is Ribosomal RNA small subunit methyltransferase A (279 aa).

S-adenosyl-L-methionine-binding residues include N27, L29, G54, E76, D102, and N127.

Belongs to the class I-like SAM-binding methyltransferase superfamily. rRNA adenine N(6)-methyltransferase family. RsmA subfamily.

The protein localises to the cytoplasm. The enzyme catalyses adenosine(1518)/adenosine(1519) in 16S rRNA + 4 S-adenosyl-L-methionine = N(6)-dimethyladenosine(1518)/N(6)-dimethyladenosine(1519) in 16S rRNA + 4 S-adenosyl-L-homocysteine + 4 H(+). In terms of biological role, specifically dimethylates two adjacent adenosines (A1518 and A1519) in the loop of a conserved hairpin near the 3'-end of 16S rRNA in the 30S particle. May play a critical role in biogenesis of 30S subunits. The protein is Ribosomal RNA small subunit methyltransferase A of Mesorhizobium japonicum (strain LMG 29417 / CECT 9101 / MAFF 303099) (Mesorhizobium loti (strain MAFF 303099)).